Here is a 467-residue protein sequence, read N- to C-terminus: Probable Xaa-Pro aminopeptidase pepP (467 aa).

Residues Asp-264, Asp-275, Glu-398, and Glu-438 each coordinate Mn(2+).

The protein belongs to the peptidase M24B family. Mn(2+) is required as a cofactor.

It carries out the reaction Release of any N-terminal amino acid, including proline, that is linked to proline, even from a dipeptide or tripeptide.. In terms of biological role, catalyzes the removal of a penultimate prolyl residue from the N-termini of peptides. In Neosartorya fischeri (strain ATCC 1020 / DSM 3700 / CBS 544.65 / FGSC A1164 / JCM 1740 / NRRL 181 / WB 181) (Aspergillus fischerianus), this protein is Probable Xaa-Pro aminopeptidase pepP (pepP).